Consider the following 440-residue polypeptide: Xylose isomerase (440 aa).

Active-site residues include H101 and D104. 7 residues coordinate Mg(2+): E232, E268, H271, D296, D307, D309, and D339.

Belongs to the xylose isomerase family. In terms of assembly, homotetramer. Requires Mg(2+) as cofactor.

The protein localises to the cytoplasm. The enzyme catalyses alpha-D-xylose = alpha-D-xylulofuranose. This chain is Xylose isomerase, found in Salmonella dublin (strain CT_02021853).